Consider the following 177-residue polypeptide: uncharacterized protein (177 aa).

Residues 1–27 (MSHSRRAAPTQDQCHTPGFPTSRETSG) form a disordered region.

This is an uncharacterized protein from Homo sapiens (Human).